A 37-amino-acid chain; its full sequence is Photosystem II reaction center protein Psb30 (37 aa).

A helical transmembrane segment spans residues leucine 10–tryptophan 30.

Belongs to the Psb30/Ycf12 family. In terms of assembly, PSII is composed of 1 copy each of membrane proteins PsbA, PsbB, PsbC, PsbD, PsbE, PsbF, PsbH, PsbI, PsbJ, PsbK, PsbL, PsbM, PsbT, PsbX, Psb30/Ycf12, peripheral proteins PsbO, CyanoQ (PsbQ), PsbU, PsbV and a large number of cofactors. It forms dimeric complexes.

The protein resides in the cell inner membrane. Its function is as follows. A core subunit of photosystem II (PSII), probably helps stabilize the reaction center. This chain is Photosystem II reaction center protein Psb30, found in Gloeobacter violaceus (strain ATCC 29082 / PCC 7421).